Consider the following 181-residue polypeptide: Oligoribonuclease (181 aa).

One can recognise an Exonuclease domain in the interval 8–171; that stretch reads LIWIDLEMTG…DDIRESIAEL (164 aa). The active site involves tyrosine 129.

The protein belongs to the oligoribonuclease family.

It is found in the cytoplasm. Functionally, 3'-to-5' exoribonuclease specific for small oligoribonucleotides. This Vibrio cholerae serotype O1 (strain ATCC 39541 / Classical Ogawa 395 / O395) protein is Oligoribonuclease.